Reading from the N-terminus, the 1523-residue chain is ATP-binding cassette sub-family C member 3 (1523 aa).

Over 1–35 (MDRLCGSGELGSKFWDSNLSIYTNTPDLTPCFQNS) the chain is Extracellular. N-linked (GlcNAc...) asparagine glycosylation occurs at N18. The helical transmembrane segment at 36-56 (LLAWVPCIYLWAALPCYLFYL) threads the bilayer. Topologically, residues 57 to 75 (RHHQLGYIVLSWLSRLKTA) are cytoplasmic. The chain crosses the membrane as a helical span at residues 76-96 (LGVLLWCVSWVDLFYSFHGLI). Residues 97 to 102 (HGSSPA) are Extracellular-facing. The chain crosses the membrane as a helical span at residues 103-123 (PVFFVTPLVVGITMLLATLLI). Over 124–129 (QYERLR) the chain is Cytoplasmic. The helical transmembrane segment at 130–150 (GVQSSGVLIIFWLLCVICAII) threads the bilayer. Over 151-170 (PFRSKILSALAEGKILDPFR) the chain is Extracellular. Residues 171 to 191 (FTTFYIYFALVFCALILSCFK) traverse the membrane as a helical segment. Residues 192-301 (EKPPLFSPEN…KSKQPSFLRA (110 aa)) are Cytoplasmic-facing. The chain crosses the membrane as a helical span at residues 302 to 324 (LVRTFTSSLLMSACFNLIQNLLG). The ABC transmembrane type-1 1 domain occupies 310 to 593 (LLMSACFNLI…LPQLISGLTQ (284 aa)). Over 325–345 (FVNPQLLSILIRFISDPTAPT) the chain is Extracellular. A helical membrane pass occupies residues 346 to 366 (WWGFLLAGLMFLSSTMQTLIL). Over 367-419 (HQYYHCIFVMALRLRTAIIGVIYRKALVITNSVKRESTVGEMVNLMSVDAQRF) the chain is Cytoplasmic. A helical membrane pass occupies residues 420–440 (MDVSPFINLLWSAPLQVILAI). Position 441 (Y441) is a topological domain, extracellular. A helical membrane pass occupies residues 442-462 (FLWQILGPSALAGVAVIVLLI). Residues 463-535 (PLNGAVSMKM…KGAYLQAIST (73 aa)) are Cytoplasmic-facing. The helical transmembrane segment at 536 to 556 (FIWICTPFLVTLITLGVYVYV) threads the bilayer. Topologically, residues 557-567 (DESNVLDAEKA) are extracellular. Residues 568–588 (FVSLSLFNILKIPLNMLPQLI) traverse the membrane as a helical segment. Residues 589-967 (SGLTQASVSL…YAKSMGLCTT (379 aa)) are Cytoplasmic-facing. Residues 626–850 (ITIHNGTFTW…DGSFANFLRN (225 aa)) form the ABC transporter 1 domain. 660–667 (GPVGCGKS) contributes to the ATP binding site. Residues S903 and S906 each carry the phosphoserine modification. The span at 903–915 (SSLSSEGEVQNRT) shows a compositional bias: polar residues. The segment at 903 to 923 (SSLSSEGEVQNRTMPKKHTNS) is disordered. An ABC transmembrane type-1 2 domain is found at 967 to 1248 (TLSICLLYGG…MIRMISDLES (282 aa)). A helical membrane pass occupies residues 968 to 988 (LSICLLYGGQSAAAIGANVWL). Over 989-1013 (SAWSNDAEEHGQQNKTSVRLGVYAA) the chain is Extracellular. N1002 is a glycosylation site (N-linked (GlcNAc...) asparagine). The chain crosses the membrane as a helical span at residues 1014–1034 (LGILQGLLVMLSAFTMVVGAI). The Cytoplasmic portion of the chain corresponds to 1035–1071 (QAARLLHEALLHNKIRSPQSFFDTTPSGRILNRFSKD). A helical membrane pass occupies residues 1072–1092 (IYVIDEVLAPTILMLLNSFFT). Topologically, residues 1093–1096 (SIST) are extracellular. A helical transmembrane segment spans residues 1097-1117 (IMVIVASTPLFMVVVLPLAVL). The Cytoplasmic portion of the chain corresponds to 1118 to 1191 (YGFVQRFYVA…YPYIASNRWL (74 aa)). Residues 1192 to 1212 (GVHVEFVGNCVVLFAALFAVI) traverse the membrane as a helical segment. Residues 1213–1219 (GRNSLNP) are Extracellular-facing. Residues 1220 to 1240 (GLVGLSVSYALQVTMALNWMI) form a helical membrane-spanning segment. Topologically, residues 1241 to 1523 (RMISDLESNI…YGMAKDAGLA (283 aa)) are cytoplasmic. Positions 1287–1519 (FRNYSVRYRP…GGIFYGMAKD (233 aa)) constitute an ABC transporter 2 domain. An ATP-binding site is contributed by 1319–1326 (GRTGAGKS).

It belongs to the ABC transporter superfamily. ABCC family. Conjugate transporter (TC 3.A.1.208) subfamily. As to expression, detected throughout the gastrointestinal tract, liver, lung, pancreas, bladder, gall bladder and at low levels in the adrenal gland.

It is found in the basolateral cell membrane. The protein localises to the basal cell membrane. It carries out the reaction an S-substituted glutathione(in) + ATP + H2O = an S-substituted glutathione(out) + ADP + phosphate + H(+). The catalysed reaction is ATP + H2O + xenobioticSide 1 = ADP + phosphate + xenobioticSide 2.. The enzyme catalyses 17beta-estradiol 17-O-(beta-D-glucuronate)(in) + ATP + H2O = 17beta-estradiol 17-O-(beta-D-glucuronate)(out) + ADP + phosphate + H(+). It catalyses the reaction dehydroepiandrosterone 3-sulfate(in) + ATP + H2O = dehydroepiandrosterone 3-sulfate(out) + ADP + phosphate + H(+). It carries out the reaction leukotriene C4(in) + ATP + H2O = leukotriene C4(out) + ADP + phosphate + H(+). The catalysed reaction is taurocholate(in) + ATP + H2O = taurocholate(out) + ADP + phosphate + H(+). The enzyme catalyses glycocholate(in) + ATP + H2O = glycocholate(out) + ADP + phosphate + H(+). It catalyses the reaction taurolithocholate 3-sulfate(in) + ATP + H2O = taurolithocholate 3-sulfate(out) + ADP + phosphate + H(+). It carries out the reaction taurochenodeoxycholate 3-sulfate(in) + ATP + H2O = taurochenodeoxycholate 3-sulfate(out) + ADP + phosphate + H(+). The catalysed reaction is (4Z,15Z)-bilirubin IXalpha C8-beta-D-glucuronoside(in) + ATP + H2O = (4Z,15Z)-bilirubin IXalpha C8-beta-D-glucuronoside(out) + ADP + phosphate + H(+). The enzyme catalyses (4Z,15Z)-bilirubin IXalpha C8,C12-beta-D-bisglucuronoside(in) + ATP + H2O = (4Z,15Z)-bilirubin IXalpha C8,C12-beta-D-bisglucuronoside(out) + ADP + phosphate + H(+). In terms of biological role, ATP-dependent transporter of the ATP-binding cassette (ABC) family that binds and hydrolyzes ATP to enable active transport of various substrates including many drugs, toxicants and endogenous compound across cell membranes. Transports glucuronide conjugates such as bilirubin diglucuronide, estradiol-17-beta-o-glucuronide and GSH conjugates such as leukotriene C4 (LTC4). Transports also various bile salts (taurocholate, glycocholate, taurochenodeoxycholate-3-sulfate, taurolithocholate- 3-sulfate). Does not contribute substantially to bile salt physiology but provides an alternative route for the export of bile acids and glucuronides from cholestatic hepatocytes. May contribute to regulate the transport of organic compounds in testes across the blood-testis-barrier. The polypeptide is ATP-binding cassette sub-family C member 3 (Abcc3) (Mus musculus (Mouse)).